The primary structure comprises 110 residues: MSQGVEFNRLMLDMRAMQADAMSLPKATAAPELAEGQSSFADMLGQAIGKVHQTQQASTQLANAFEIGKSGVDLTDVMIASQKASVSMQALTQVRNKLVQAYQDIMQMPV.

This sequence belongs to the FliE family.

It localises to the bacterial flagellum basal body. The protein is Flagellar hook-basal body complex protein FliE of Pseudomonas putida (strain W619).